The primary structure comprises 838 residues: Probable inorganic carbon transporter subunit DabA (838 aa).

Zn(2+) is bound by residues Cys-353, Asp-355, His-537, and Cys-552.

Belongs to the inorganic carbon transporter (TC 9.A.2) DabA family. As to quaternary structure, forms a complex with DabB. Zn(2+) serves as cofactor.

Its subcellular location is the cell membrane. Its function is as follows. Part of an energy-coupled inorganic carbon pump. In Roseiflexus sp. (strain RS-1), this protein is Probable inorganic carbon transporter subunit DabA.